The chain runs to 93 residues: Alpha-defensin 24 (93 aa).

A signal peptide spans 1–19 (MKTLILLSALVLLAFQVQA). Positions 20-58 (DPIQNTDEETKTEEQPGEEDQAVSVSFGDPEGASLQEES) are excised as a propeptide. Residues 23 to 54 (QNTDEETKTEEQPGEEDQAVSVSFGDPEGASL) are disordered. Intrachain disulfides connect cysteine 64-cysteine 92, cysteine 66-cysteine 81, and cysteine 71-cysteine 91.

It belongs to the alpha-defensin family.

The protein resides in the secreted. Its function is as follows. May have microbicidal activities. This chain is Alpha-defensin 24 (Defa24), found in Mus musculus (Mouse).